A 355-amino-acid polypeptide reads, in one-letter code: NAD-dependent protein deacylase sirtuin-6 (355 aa).

Ser-2 is modified (N-acetylserine). Ser-10 bears the Phosphoserine mark. Residues 27-272 form the Deacetylase sirtuin-type domain; that stretch reads PEELERKVWE…TQLMKHLGLE (246 aa). Lys-33 carries the post-translational modification N6-acetyllysine. The NAD(+) site is built by Ala-53, Thr-57, Phe-64, Arg-65, Trp-71, Gln-113, and His-133. The Proton acceptor role is filled by His-133. Residues Cys-141, Cys-144, and Cys-166 each contribute to the Zn(2+) site. Residue Lys-170 forms a Glycyl lysine isopeptide (Lys-Gly) (interchain with G-Cter in ubiquitin) linkage. Residue Cys-177 coordinates Zn(2+). The NAD(+) site is built by Gly-214, Ser-216, Asn-240, Gln-242, and Val-258. A disordered region spans residues 284–355; sequence KALPPLPRPP…KRVKAEVTPS (72 aa). Residues 287–296 are compositionally biased toward pro residues; sequence PPLPRPPTPK. Thr-294 is modified (phosphothreonine). Residues Ser-303 and Ser-330 each carry the phosphoserine modification.

Belongs to the sirtuin family. Class IV subfamily. Homodimer; binds to nucleosomes and DNA ends as a homodimer. Interacts with RELA; interferes with RELA binding to target DNA. Interacts with SMARCA5; promoting recruitment of SMARCA5/SNF2H to double-strand breaks (DSBs) sites. Interacts with the mTORC2 complex; preventing the ability of SIRT6 to deacetylate FOXO1. Interacts with the CLOCK-BMAL1 complex; recruited by the CLOCK-BMAL1 complex to regulate expression of clock-controlled genes. Interacts with CSNK2A2; preventing CSNK2A2 localization to the nucleus. Acetylated at Lys-33. Deacetylation at Lys-33 by SIRT1 promotes homomultimerization and binding to double-strand breaks (DSBs) sites. In terms of processing, phosphorylation at Ser-10 by MAPK8/JNK1 in response to oxidative stress stimulates the mono-ADP-ribosyltransferase activity on PARP1, leading to PARP1 recruitment to double-strand breaks (DSBs). Post-translationally, monoubiquitinated at Lys-170 by STUB1/CHIP, preventing its degradation by the proteasome. Sumoylated, leading to specifically decrease ability to deacetylate histone H3 at 'Lys-56' (H3K56ac).

The protein localises to the nucleus. It is found in the chromosome. It localises to the telomere. The protein resides in the endoplasmic reticulum. It catalyses the reaction N(6)-acetyl-L-lysyl-[protein] + NAD(+) + H2O = 2''-O-acetyl-ADP-D-ribose + nicotinamide + L-lysyl-[protein]. It carries out the reaction N(6)-tetradecanoyl-L-lysyl-[protein] + NAD(+) + H2O = 2''-O-tetradecanoyl-ADP-D-ribose + nicotinamide + L-lysyl-[protein]. The catalysed reaction is N(6)-hexadecanoyl-L-lysyl-[protein] + NAD(+) + H2O = 2''-O-hexadecanoyl-ADP-D-ribose + nicotinamide + L-lysyl-[protein]. The enzyme catalyses L-lysyl-[protein] + NAD(+) = N(6)-(ADP-D-ribosyl)-L-lysyl-[protein] + nicotinamide + H(+). It catalyses the reaction L-arginyl-[protein] + NAD(+) = N(omega)-(ADP-D-ribosyl)-L-arginyl-[protein] + nicotinamide + H(+). With respect to regulation, compared to the defatty-acylase activity, the protein deacetylase activity is weak in vitro, and requires activation. The histone deacetylase activity is strongly activated upon binding to nucleosomes and chromatin in vivo. Two molecules of SIRT6 associate with the acidic patch of one nucleosome, while the C-terminal disordered region of SIRT6 associates with nucleosomal DNA, leading to efficient histone deacetylation. The protein-lysine deacetylase activity is also activated by long-chain free fatty-acids. Functionally, NAD-dependent protein deacetylase, deacylase and mono-ADP-ribosyltransferase that plays an essential role in DNA damage repair, telomere maintenance, metabolic homeostasis, inflammation, tumorigenesis and aging. Displays protein-lysine deacetylase or defatty-acylase (demyristoylase and depalmitoylase) activity, depending on the context. Acts as a key histone deacetylase by catalyzing deacetylation of histone H3 at 'Lys-9', 'Lys-18' and 'Lys-56' (H3K9ac, H3K18ac and H3K56ac, respectively), suppressing target gene expression of several transcription factors, including NF-kappa-B. Acts as an inhibitor of transcription elongation by mediating deacetylation of H3K9ac and H3K56ac, preventing release of NELFE from chromatin and causing transcriptional pausing. Involved in DNA repair by promoting double-strand break (DSB) repair: acts as a DSB sensor by recognizing and binding DSB sites, leading to (1) recruitment of DNA repair proteins, such as SMARCA5/SNF2H, and (2) deacetylation of histone H3K9ac and H3K56ac. SIRT6 participation to DSB repair is probably involved in extension of life span. Also promotes DNA repair by deacetylating non-histone proteins, such as DDB2 and p53/TP53. Specifically deacetylates H3K18ac at pericentric heterochromatin, thereby maintaining pericentric heterochromatin silencing at centromeres and protecting against genomic instability and cellular senescence. Involved in telomere maintenance by catalyzing deacetylation of histone H3 in telomeric chromatin, regulating telomere position effect and telomere movement in response to DNA damage. Required for embryonic stem cell differentiation by mediating histone deacetylation of H3K9ac. Plays a major role in metabolism by regulating processes such as glycolysis, gluconeogenesis, insulin secretion and lipid metabolism. Inhibits glycolysis via histone deacetylase activity and by acting as a corepressor of the transcription factor HIF1A, thereby controlling the expression of multiple glycolytic genes. Has tumor suppressor activity by repressing glycolysis, thereby inhibiting the Warburg effect. Also regulates glycolysis and tumorigenesis by mediating deacetylation and nuclear export of non-histone proteins, such as isoform M2 of PKM (PKM2). Acts as a negative regulator of gluconeogenesis by mediating deacetylation of non-histone proteins, such as FOXO1 and KAT2A/GCN5. Promotes beta-oxidation of fatty acids during fasting by catalyzing deacetylation of NCOA2, inducing coactivation of PPARA. Acts as a regulator of lipid catabolism in brown adipocytes, both by catalyzing deacetylation of histones and non-histone proteins, such as FOXO1. Also acts as a regulator of circadian rhythms, both by regulating expression of clock-controlled genes involved in lipid and carbohydrate metabolism, and by catalyzing deacetylation of PER2. The defatty-acylase activity is specifically involved in regulation of protein secretion. Has high activity toward long-chain fatty acyl groups and mediates protein-lysine demyristoylation and depalmitoylation of target proteins, such as RRAS2 and TNF, thereby regulating their secretion. Also acts as a mono-ADP-ribosyltransferase by mediating mono-ADP-ribosylation of PARP1, TRIM28/KAP1 or SMARCC2/BAF170. Mono-ADP-ribosyltransferase activity is involved in DNA repair, cellular senescence, repression of LINE-1 retrotransposon elements and regulation of transcription. The chain is NAD-dependent protein deacylase sirtuin-6 from Castor canadensis (American beaver).